Consider the following 248-residue polypeptide: UDP-N-acetyl-D-mannosaminuronic acid transferase (248 aa).

This sequence belongs to the glycosyltransferase 26 family.

The enzyme catalyses UDP-N-acetyl-alpha-D-mannosaminouronate + N-acetyl-alpha-D-glucosaminyl-di-trans,octa-cis-undecaprenyl diphosphate = beta-D-ManNAcA-(1-&gt;4)-alpha-D-GlcNAc-di-trans,octa-cis-undecaprenyl diphosphate + UDP + H(+). It functions in the pathway bacterial outer membrane biogenesis; enterobacterial common antigen biosynthesis. In terms of biological role, catalyzes the synthesis of Und-PP-GlcNAc-ManNAcA (Lipid II), the second lipid-linked intermediate involved in enterobacterial common antigen (ECA) synthesis. The polypeptide is UDP-N-acetyl-D-mannosaminuronic acid transferase (Klebsiella pneumoniae subsp. pneumoniae (strain ATCC 700721 / MGH 78578)).